The chain runs to 193 residues: Oligoribonuclease (193 aa).

The Exonuclease domain occupies 14–177 (LIWIDLEMTG…SDIYDSIAEL (164 aa)). Y135 is a catalytic residue.

Belongs to the oligoribonuclease family.

The protein localises to the cytoplasm. Its function is as follows. 3'-to-5' exoribonuclease specific for small oligoribonucleotides. The protein is Oligoribonuclease of Xylella fastidiosa (strain Temecula1 / ATCC 700964).